The primary structure comprises 710 residues: Early transcription factor 82 kDa subunit (710 aa).

Belongs to the poxviridae VETF large subunit family. Heterodimer of a 70 kDa and a 82 kDa subunit. Part of the early transcription complex composed of ETF, RAP94/OPG109, and the DNA-directed RNA polymerase.

The protein resides in the virion. Its function is as follows. Acts with RNA polymerase to initiate transcription from early gene promoters. Is recruited by the RPO-associated protein of 94 kDa RAP94/OPG109 to form the early transcription complex, which also contains the core RNA polymerase. ETF heterodimer binds to early gene promoters. This chain is Early transcription factor 82 kDa subunit (OPG133), found in Homo sapiens (Human).